The primary structure comprises 312 residues: Acetyl-coenzyme A carboxylase carboxyl transferase subunit alpha (312 aa).

Residues 36-286 enclose the CoA carboxyltransferase C-terminal domain; it reads NLEKEISKTY…ADYVKKSLNE (251 aa).

The protein belongs to the AccA family. Acetyl-CoA carboxylase is a heterohexamer composed of biotin carboxyl carrier protein (AccB), biotin carboxylase (AccC) and two subunits each of ACCase subunit alpha (AccA) and ACCase subunit beta (AccD).

Its subcellular location is the cytoplasm. The catalysed reaction is N(6)-carboxybiotinyl-L-lysyl-[protein] + acetyl-CoA = N(6)-biotinyl-L-lysyl-[protein] + malonyl-CoA. The protein operates within lipid metabolism; malonyl-CoA biosynthesis; malonyl-CoA from acetyl-CoA: step 1/1. In terms of biological role, component of the acetyl coenzyme A carboxylase (ACC) complex. First, biotin carboxylase catalyzes the carboxylation of biotin on its carrier protein (BCCP) and then the CO(2) group is transferred by the carboxyltransferase to acetyl-CoA to form malonyl-CoA. This Campylobacter jejuni subsp. jejuni serotype O:23/36 (strain 81-176) protein is Acetyl-coenzyme A carboxylase carboxyl transferase subunit alpha.